Here is a 138-residue protein sequence, read N- to C-terminus: Large ribosomal subunit protein uL16 (138 aa).

The span at 1–13 (MLQPKRRKYRKEQ) shows a compositional bias: basic residues. The tract at residues 1 to 22 (MLQPKRRKYRKEQKGRNTGVAT) is disordered.

This sequence belongs to the universal ribosomal protein uL16 family. In terms of assembly, part of the 50S ribosomal subunit.

Binds 23S rRNA and is also seen to make contacts with the A and possibly P site tRNAs. The polypeptide is Large ribosomal subunit protein uL16 (Paraburkholderia phymatum (strain DSM 17167 / CIP 108236 / LMG 21445 / STM815) (Burkholderia phymatum)).